We begin with the raw amino-acid sequence, 122 residues long: Small ribosomal subunit protein uS13 (122 aa).

Residues 97–122 are disordered; the sequence is PVRGQRTHTNAKTRKGRSKLPIAGKK.

It belongs to the universal ribosomal protein uS13 family. In terms of assembly, part of the 30S ribosomal subunit. Forms a loose heterodimer with protein S19. Forms two bridges to the 50S subunit in the 70S ribosome.

In terms of biological role, located at the top of the head of the 30S subunit, it contacts several helices of the 16S rRNA. In the 70S ribosome it contacts the 23S rRNA (bridge B1a) and protein L5 of the 50S subunit (bridge B1b), connecting the 2 subunits; these bridges are implicated in subunit movement. Contacts the tRNAs in the A and P-sites. This Wolbachia pipientis subsp. Culex pipiens (strain wPip) protein is Small ribosomal subunit protein uS13.